Here is a 338-residue protein sequence, read N- to C-terminus: 4-hydroxythreonine-4-phosphate dehydrogenase (338 aa).

Substrate contacts are provided by H136 and T137. Residues H173, H218, and H273 each contribute to the a divalent metal cation site. Substrate contacts are provided by K281, N290, and R299.

It belongs to the PdxA family. Homodimer. Requires Zn(2+) as cofactor. The cofactor is Mg(2+). Co(2+) is required as a cofactor.

The protein localises to the cytoplasm. The catalysed reaction is 4-(phosphooxy)-L-threonine + NAD(+) = 3-amino-2-oxopropyl phosphate + CO2 + NADH. It participates in cofactor biosynthesis; pyridoxine 5'-phosphate biosynthesis; pyridoxine 5'-phosphate from D-erythrose 4-phosphate: step 4/5. Functionally, catalyzes the NAD(P)-dependent oxidation of 4-(phosphooxy)-L-threonine (HTP) into 2-amino-3-oxo-4-(phosphooxy)butyric acid which spontaneously decarboxylates to form 3-amino-2-oxopropyl phosphate (AHAP). The polypeptide is 4-hydroxythreonine-4-phosphate dehydrogenase (Ralstonia nicotianae (strain ATCC BAA-1114 / GMI1000) (Ralstonia solanacearum)).